We begin with the raw amino-acid sequence, 341 residues long: Ribosomal RNA small subunit methyltransferase C (341 aa).

Belongs to the methyltransferase superfamily. RsmC family. As to quaternary structure, monomer.

It is found in the cytoplasm. The catalysed reaction is guanosine(1207) in 16S rRNA + S-adenosyl-L-methionine = N(2)-methylguanosine(1207) in 16S rRNA + S-adenosyl-L-homocysteine + H(+). Specifically methylates the guanine in position 1207 of 16S rRNA in the 30S particle. This Vibrio parahaemolyticus serotype O3:K6 (strain RIMD 2210633) protein is Ribosomal RNA small subunit methyltransferase C.